The chain runs to 96 residues: MRKSKGFKSRSRYKLKRSIRPKRANPISRKIQVFEVGNKVHIIVDSSIHRGQPHPRFHGKTGEVVGQKGKAYLVAIKDGNKAKELIIRPEHLKLQE.

The segment at 1–22 (MRKSKGFKSRSRYKLKRSIRPK) is disordered.

Belongs to the eukaryotic ribosomal protein eL21 family.

This Methanosphaera stadtmanae (strain ATCC 43021 / DSM 3091 / JCM 11832 / MCB-3) protein is Large ribosomal subunit protein eL21.